A 123-amino-acid chain; its full sequence is Small ribosomal subunit protein uS12cz/uS12cy (123 aa).

It belongs to the universal ribosomal protein uS12 family. In terms of assembly, part of the 30S ribosomal subunit.

Its subcellular location is the plastid. The protein resides in the chloroplast. In terms of biological role, with S4 and S5 plays an important role in translational accuracy. Located at the interface of the 30S and 50S subunits. The protein is Small ribosomal subunit protein uS12cz/uS12cy (rps12-A) of Phaseolus vulgaris (Kidney bean).